A 425-amino-acid polypeptide reads, in one-letter code: Serine--tRNA ligase 2 (425 aa).

230 to 232 lines the L-serine pocket; that stretch reads TAE. 261-263 contributes to the ATP binding site; sequence REE. Glu-284 is an L-serine binding site. 348 to 351 is an ATP binding site; sequence EISS. Ser-383 contacts L-serine.

Belongs to the class-II aminoacyl-tRNA synthetase family. Type-1 seryl-tRNA synthetase subfamily. Homodimer. The tRNA molecule binds across the dimer.

Its subcellular location is the cytoplasm. It carries out the reaction tRNA(Ser) + L-serine + ATP = L-seryl-tRNA(Ser) + AMP + diphosphate + H(+). The enzyme catalyses tRNA(Sec) + L-serine + ATP = L-seryl-tRNA(Sec) + AMP + diphosphate + H(+). Its pathway is aminoacyl-tRNA biosynthesis; selenocysteinyl-tRNA(Sec) biosynthesis; L-seryl-tRNA(Sec) from L-serine and tRNA(Sec): step 1/1. Catalyzes the attachment of serine to tRNA(Ser). Is also able to aminoacylate tRNA(Sec) with serine, to form the misacylated tRNA L-seryl-tRNA(Sec), which will be further converted into selenocysteinyl-tRNA(Sec). The sequence is that of Serine--tRNA ligase 2 from Lactiplantibacillus plantarum (strain ATCC BAA-793 / NCIMB 8826 / WCFS1) (Lactobacillus plantarum).